The sequence spans 128 residues: Small ribosomal subunit protein uS9 (128 aa).

Positions 106–128 (PRVVERKKPGRPKARKRFQFSKR) are disordered. Residues 113 to 128 (KPGRPKARKRFQFSKR) show a composition bias toward basic residues.

It belongs to the universal ribosomal protein uS9 family.

The protein is Small ribosomal subunit protein uS9 of Porphyromonas gingivalis (strain ATCC 33277 / DSM 20709 / CIP 103683 / JCM 12257 / NCTC 11834 / 2561).